Here is a 108-residue protein sequence, read N- to C-terminus: Tetrahydromethanopterin S-methyltransferase subunit B (108 aa).

A helical transmembrane segment spans residues 79-99 (GMFFGFWVTMAILVLVTILAV).

It belongs to the MtrB family. In terms of assembly, the complex is composed of 8 subunits; MtrA, MtrB, MtrC, MtrD, MtrE, MtrF, MtrG and MtrH.

Its subcellular location is the cell membrane. The catalysed reaction is 5-methyl-5,6,7,8-tetrahydromethanopterin + coenzyme M + 2 Na(+)(in) = 5,6,7,8-tetrahydromethanopterin + methyl-coenzyme M + 2 Na(+)(out). The protein operates within one-carbon metabolism; methanogenesis from CO(2); methyl-coenzyme M from 5,10-methylene-5,6,7,8-tetrahydromethanopterin: step 2/2. Functionally, part of a complex that catalyzes the formation of methyl-coenzyme M and tetrahydromethanopterin from coenzyme M and methyl-tetrahydromethanopterin. This is an energy-conserving, sodium-ion translocating step. The chain is Tetrahydromethanopterin S-methyltransferase subunit B from Methanococcus maripaludis (strain C7 / ATCC BAA-1331).